The following is a 199-amino-acid chain: 7-methyl-GTP pyrophosphatase (199 aa).

Aspartate 76 functions as the Proton acceptor in the catalytic mechanism.

It belongs to the Maf family. YceF subfamily. A divalent metal cation serves as cofactor.

The protein localises to the cytoplasm. The catalysed reaction is N(7)-methyl-GTP + H2O = N(7)-methyl-GMP + diphosphate + H(+). Nucleoside triphosphate pyrophosphatase that hydrolyzes 7-methyl-GTP (m(7)GTP). May have a dual role in cell division arrest and in preventing the incorporation of modified nucleotides into cellular nucleic acids. This Nitrosococcus oceani (strain ATCC 19707 / BCRC 17464 / JCM 30415 / NCIMB 11848 / C-107) protein is 7-methyl-GTP pyrophosphatase.